The chain runs to 308 residues: Probable dimethyladenosine transferase (308 aa).

Over residues 1–11 (MGKTSKVKKTK) the composition is skewed to basic residues. The interval 1 to 24 (MGKTSKVKKTKAGSSTGNVQSLPF) is disordered. Polar residues predominate over residues 12–24 (AGSSTGNVQSLPF). H31, L33, G58, E79, D107, and N122 together coordinate S-adenosyl-L-methionine.

This sequence belongs to the class I-like SAM-binding methyltransferase superfamily. rRNA adenine N(6)-methyltransferase family. In terms of assembly, part of the small subunit (SSU) processome, composed of more than 70 proteins and the RNA chaperone small nucleolar RNA (snoRNA) U3.

The protein localises to the nucleus. The protein resides in the nucleolus. The enzyme catalyses adenosine(1779)/adenosine(1780) in 18S rRNA + 4 S-adenosyl-L-methionine = N(6)-dimethyladenosine(1779)/N(6)-dimethyladenosine(1780) in 18S rRNA + 4 S-adenosyl-L-homocysteine + 4 H(+). Functionally, specifically dimethylates two adjacent adenosines in the loop of a conserved hairpin near the 3'-end of 18S rRNA in the 40S particle. Involved in the pre-rRNA processing steps leading to small-subunit rRNA production independently of its RNA-modifying catalytic activity. Part of the small subunit (SSU) processome, first precursor of the small eukaryotic ribosomal subunit. During the assembly of the SSU processome in the nucleolus, many ribosome biogenesis factors, an RNA chaperone and ribosomal proteins associate with the nascent pre-rRNA and work in concert to generate RNA folding, modifications, rearrangements and cleavage as well as targeted degradation of pre-ribosomal RNA by the RNA exosome. The polypeptide is Probable dimethyladenosine transferase (Caenorhabditis elegans).